The sequence spans 294 residues: MSHEKSESCLQEKKHSSSFERFHDGTSLENNLLQNLKLSSQRVLEIAQKKGRSKCPKCNSSRMFYCYTCFVPVESVPSDEIPVVKLPLKIDIIKHPNETDGKSTAVHAKLLAHEDVTVYTYPCVPQYQDQKHEVVLVFPGPDSVSLSDSLLYIRGSGDMQNDSSCEPSLKRPKCSQQYDKSKNEGVEEKKPMHFLKKLIFIDSTWNQTNKIISDERLQGLQQVELMERKTCFWRHQKGTPNTYLSTIEAIYYFMIDYHTIILQKDYKGEYDDLLFFFSFMYRIINDAKKSAGKL.

The disordered stretch occupies residues 158–185 (DMQNDSSCEPSLKRPKCSQQYDKSKNEG). The DXTW motif lies at 202–205 (DSTW).

This sequence belongs to the TDD superfamily. DTWD1 family.

Its subcellular location is the nucleus. The enzyme catalyses a uridine in tRNA + S-adenosyl-L-methionine = a 3-[(3S)-3-amino-3-carboxypropyl]uridine in tRNA + S-methyl-5'-thioadenosine + H(+). Functionally, catalyzes the formation of 3-(3-amino-3-carboxypropyl)uridine (acp3U) at position 20 in the D-loop of several cytoplasmic tRNAs (acp3U(20)). The chain is tRNA-uridine aminocarboxypropyltransferase 1 from Xenopus tropicalis (Western clawed frog).